Here is a 431-residue protein sequence, read N- to C-terminus: Alpha-gurjunene synthase (431 aa).

Residues Asp-126 and Asp-130 each contribute to the Mg(2+) site. (2E,6E)-farnesyl diphosphate is bound at residue Arg-267. 2 residues coordinate Mg(2+): Asn-321 and Ser-325. Lys-328 is a (2E,6E)-farnesyl diphosphate binding site. Residue Glu-329 participates in Mg(2+) binding. Residue 412-413 participates in (2E,6E)-farnesyl diphosphate binding; the sequence is RY.

This sequence belongs to the terpene synthase family. Mg(2+) is required as a cofactor.

The catalysed reaction is (2E,6E)-farnesyl diphosphate = (-)-alpha-gurjunene + diphosphate. The enzyme catalyses (2E,6E)-farnesyl diphosphate + H2O = 5-hydroxy-alpha-gurjunene + diphosphate. Its pathway is secondary metabolite biosynthesis; terpenoid biosynthesis. Functionally, catalyzes the conversion of (2E,6E)-farnesyl diphosphate (FPP) into the sesquiterpene alcohols (-)-alpha-gurjunene and 5-hydroxy-alpha-gurjunene. Other unidentified sesquiterpene alcohols found to be catalyzed by MTPSL4 may arise from carbocation reaction intermediates along the catalytic cascade to gurjunene being quenched by a water molecule, yielding formation of the alcohols. This is Alpha-gurjunene synthase from Marchantia polymorpha (Common liverwort).